The sequence spans 196 residues: MYDYIKGKLSKITAKFIVVETAGLGYMIYVANPYSFSGYVNQEVTIYLHQVIRDDAHLLFGFHTENEKEIFLNLISVSGIGPTTALAIIAVDDNEGLVSAIDNSDIKYLTKFPKIGKKTAQQMILDLSGKFVEASGESATSRKVSSEQNSNLEEAMEALLALGYKATELKKVKAFFEGTNETVEQYIKSSLKMLMK.

Residues 1-63 (MYDYIKGKLS…DDAHLLFGFH (63 aa)) form a domain I region. The segment at 64-142 (TENEKEIFLN…EASGESATSR (79 aa)) is domain II. Residues 143 to 148 (KVSSEQ) are flexible linker. Residues 148-196 (QNSNLEEAMEALLALGYKATELKKVKAFFEGTNETVEQYIKSSLKMLMK) are domain III.

The protein belongs to the RuvA family. In terms of assembly, homotetramer. Forms an RuvA(8)-RuvB(12)-Holliday junction (HJ) complex. HJ DNA is sandwiched between 2 RuvA tetramers; dsDNA enters through RuvA and exits via RuvB. An RuvB hexamer assembles on each DNA strand where it exits the tetramer. Each RuvB hexamer is contacted by two RuvA subunits (via domain III) on 2 adjacent RuvB subunits; this complex drives branch migration. In the full resolvosome a probable DNA-RuvA(4)-RuvB(12)-RuvC(2) complex forms which resolves the HJ.

The protein localises to the cytoplasm. In terms of biological role, the RuvA-RuvB-RuvC complex processes Holliday junction (HJ) DNA during genetic recombination and DNA repair, while the RuvA-RuvB complex plays an important role in the rescue of blocked DNA replication forks via replication fork reversal (RFR). RuvA specifically binds to HJ cruciform DNA, conferring on it an open structure. The RuvB hexamer acts as an ATP-dependent pump, pulling dsDNA into and through the RuvAB complex. HJ branch migration allows RuvC to scan DNA until it finds its consensus sequence, where it cleaves and resolves the cruciform DNA. In Streptococcus agalactiae serotype III (strain NEM316), this protein is Holliday junction branch migration complex subunit RuvA.